A 429-amino-acid chain; its full sequence is Phosphoglucosamine mutase (429 aa).

Ser-96 (phosphoserine intermediate) is an active-site residue. Residues Ser-96, Asp-230, Asp-232, and Asp-234 each contribute to the Mg(2+) site. Phosphoserine is present on Ser-96.

It belongs to the phosphohexose mutase family. Mg(2+) is required as a cofactor. Post-translationally, activated by phosphorylation.

It carries out the reaction alpha-D-glucosamine 1-phosphate = D-glucosamine 6-phosphate. Functionally, catalyzes the conversion of glucosamine-6-phosphate to glucosamine-1-phosphate. The protein is Phosphoglucosamine mutase of Thermotoga petrophila (strain ATCC BAA-488 / DSM 13995 / JCM 10881 / RKU-1).